The following is a 227-amino-acid chain: Cytochrome c oxidase subunit 2 (227 aa).

Residues 1 to 14 (MAYPYELGFQDASS) lie on the Mitochondrial intermembrane side of the membrane. The chain crosses the membrane as a helical span at residues 15–45 (PIMEELLHFHDHTLMIVFLISTLVLYLITIM). The Mitochondrial matrix segment spans residues 46–59 (LTTKLTHTSTMDAQ). The chain crosses the membrane as a helical span at residues 60–87 (EIETIWTILPAIILILIALPSLRILYMM). The Mitochondrial intermembrane segment spans residues 88 to 227 (DEINSPSLTV…DFEIWSSSML (140 aa)). Residues H161, C196, E198, C200, H204, and M207 each coordinate Cu cation. E198 is a binding site for Mg(2+).

It belongs to the cytochrome c oxidase subunit 2 family. As to quaternary structure, component of the cytochrome c oxidase (complex IV, CIV), a multisubunit enzyme composed of 14 subunits. The complex is composed of a catalytic core of 3 subunits MT-CO1, MT-CO2 and MT-CO3, encoded in the mitochondrial DNA, and 11 supernumerary subunits COX4I, COX5A, COX5B, COX6A, COX6B, COX6C, COX7A, COX7B, COX7C, COX8 and NDUFA4, which are encoded in the nuclear genome. The complex exists as a monomer or a dimer and forms supercomplexes (SCs) in the inner mitochondrial membrane with NADH-ubiquinone oxidoreductase (complex I, CI) and ubiquinol-cytochrome c oxidoreductase (cytochrome b-c1 complex, complex III, CIII), resulting in different assemblies (supercomplex SCI(1)III(2)IV(1) and megacomplex MCI(2)III(2)IV(2)). Found in a complex with TMEM177, COA6, COX18, COX20, SCO1 and SCO2. Interacts with TMEM177 in a COX20-dependent manner. Interacts with COX20. Interacts with COX16. Cu cation is required as a cofactor.

It is found in the mitochondrion inner membrane. The enzyme catalyses 4 Fe(II)-[cytochrome c] + O2 + 8 H(+)(in) = 4 Fe(III)-[cytochrome c] + 2 H2O + 4 H(+)(out). Component of the cytochrome c oxidase, the last enzyme in the mitochondrial electron transport chain which drives oxidative phosphorylation. The respiratory chain contains 3 multisubunit complexes succinate dehydrogenase (complex II, CII), ubiquinol-cytochrome c oxidoreductase (cytochrome b-c1 complex, complex III, CIII) and cytochrome c oxidase (complex IV, CIV), that cooperate to transfer electrons derived from NADH and succinate to molecular oxygen, creating an electrochemical gradient over the inner membrane that drives transmembrane transport and the ATP synthase. Cytochrome c oxidase is the component of the respiratory chain that catalyzes the reduction of oxygen to water. Electrons originating from reduced cytochrome c in the intermembrane space (IMS) are transferred via the dinuclear copper A center (CU(A)) of subunit 2 and heme A of subunit 1 to the active site in subunit 1, a binuclear center (BNC) formed by heme A3 and copper B (CU(B)). The BNC reduces molecular oxygen to 2 water molecules using 4 electrons from cytochrome c in the IMS and 4 protons from the mitochondrial matrix. The protein is Cytochrome c oxidase subunit 2 (MT-CO2) of Cavia aperea (Brazilian guinea pig).